The following is a 46-amino-acid chain: MSTLPILLATLPEAYLPFRPLVDVLPSIPVLFLLLAFVWQAAVSFR.

Residues 1–9 (MSTLPILLA) constitute a propeptide that is removed on maturation. Residues 25-45 (LPSIPVLFLLLAFVWQAAVSF) form a helical membrane-spanning segment.

Belongs to the PsbK family. PSII is composed of 1 copy each of membrane proteins PsbA, PsbB, PsbC, PsbD, PsbE, PsbF, PsbH, PsbI, PsbJ, PsbK, PsbL, PsbM, PsbT, PsbX, PsbY, PsbZ, Psb30/Ycf12, at least 3 peripheral proteins of the oxygen-evolving complex and a large number of cofactors. It forms dimeric complexes.

It is found in the plastid. The protein localises to the chloroplast thylakoid membrane. Its function is as follows. One of the components of the core complex of photosystem II (PSII). PSII is a light-driven water:plastoquinone oxidoreductase that uses light energy to abstract electrons from H(2)O, generating O(2) and a proton gradient subsequently used for ATP formation. It consists of a core antenna complex that captures photons, and an electron transfer chain that converts photonic excitation into a charge separation. In Nephroselmis olivacea (Green alga), this protein is Photosystem II reaction center protein K.